Consider the following 45-residue polypeptide: uncharacterized protein (45 aa).

A helical transmembrane segment spans residues 5-25; it reads IFFIFALSGILAACTVGGGVS.

The protein resides in the membrane. This is an uncharacterized protein from Haemophilus influenzae (strain ATCC 51907 / DSM 11121 / KW20 / Rd).